Consider the following 47-residue polypeptide: UPF0391 membrane protein rrnAC2507 (47 aa).

A run of 2 helical transmembrane segments spans residues 5–25 and 27–47; these read VVLV…IAGL and FRVA…TFLL.

Belongs to the UPF0391 family.

It is found in the cell membrane. This chain is UPF0391 membrane protein rrnAC2507, found in Haloarcula marismortui (strain ATCC 43049 / DSM 3752 / JCM 8966 / VKM B-1809) (Halobacterium marismortui).